Here is a 449-residue protein sequence, read N- to C-terminus: tRNA-2-methylthio-N(6)-dimethylallyladenosine synthase (449 aa).

The region spanning 2 to 119 (KGLFIRTYGC…LPEMIARASR (118 aa)) is the MTTase N-terminal domain. [4Fe-4S] cluster is bound by residues C11, C47, C82, C157, C161, and C164. The Radical SAM core domain maps to 143-378 (EADGPAAFVS…QALLREQQTE (236 aa)). Positions 381 to 443 (ASQIGKTLPV…LNSLTGELVR (63 aa)) constitute a TRAM domain.

The protein belongs to the methylthiotransferase family. MiaB subfamily. In terms of assembly, monomer. Requires [4Fe-4S] cluster as cofactor.

The protein resides in the cytoplasm. It catalyses the reaction N(6)-dimethylallyladenosine(37) in tRNA + (sulfur carrier)-SH + AH2 + 2 S-adenosyl-L-methionine = 2-methylsulfanyl-N(6)-dimethylallyladenosine(37) in tRNA + (sulfur carrier)-H + 5'-deoxyadenosine + L-methionine + A + S-adenosyl-L-homocysteine + 2 H(+). Its function is as follows. Catalyzes the methylthiolation of N6-(dimethylallyl)adenosine (i(6)A), leading to the formation of 2-methylthio-N6-(dimethylallyl)adenosine (ms(2)i(6)A) at position 37 in tRNAs that read codons beginning with uridine. This chain is tRNA-2-methylthio-N(6)-dimethylallyladenosine synthase, found in Hyphomonas neptunium (strain ATCC 15444).